A 185-amino-acid polypeptide reads, in one-letter code: Pro-adrenomedullin (185 aa).

An N-terminal signal peptide occupies residues 1 to 21; the sequence is MKLVSIALMLLGSLAVLGADT. Residue R41 is modified to Arginine amide. A propeptide spanning residues 45 to 91 is cleaved from the precursor; sequence ELQASSSYPTGLVDEKTVPTQTLGLQDKQSTSSTPQASTQSTAHIRV. The tract at residues 68–89 is disordered; sequence GLQDKQSTSSTPQASTQSTAHI. Residues 73-87 are compositionally biased toward low complexity; that stretch reads QSTSSTPQASTQSTA. An intrachain disulfide couples C107 to C112. Residues 125–185 form a disordered region; it reads TDKDKDGMAP…HQDISRVSRL (61 aa). At Y143 the chain carries Tyrosine amide. A propeptide spans 150–185 (preproAM C-terminal fragment); that stretch reads SLPEVLRARTVESSQEQTHSAPASPAHQDISRVSRL. A compositionally biased stretch (polar residues) spans 160–170; that stretch reads VESSQEQTHSA.

Belongs to the adrenomedullin family. Expressed in adrenal glands, lung, kidney, heart, spleen, duodenum and submandibular glands.

It localises to the secreted. In terms of biological role, adrenomedullin/ADM and proadrenomedullin N-20 terminal peptide/PAMP are peptide hormones that act as potent hypotensive and vasodilatator agents. Numerous actions have been reported most related to the physiologic control of fluid and electrolyte homeostasis. Its function is as follows. ADM function is mediated by the CALCRL-RAMP2 and CALCRL-RAMP3 receptor complexes with ADM showing the highest potency for the CALCRL-RAMP2 complex. The protein is Pro-adrenomedullin of Rattus norvegicus (Rat).